The chain runs to 72 residues: Exodeoxyribonuclease 7 small subunit (72 aa).

It belongs to the XseB family. In terms of assembly, heterooligomer composed of large and small subunits.

Its subcellular location is the cytoplasm. It catalyses the reaction Exonucleolytic cleavage in either 5'- to 3'- or 3'- to 5'-direction to yield nucleoside 5'-phosphates.. In terms of biological role, bidirectionally degrades single-stranded DNA into large acid-insoluble oligonucleotides, which are then degraded further into small acid-soluble oligonucleotides. The chain is Exodeoxyribonuclease 7 small subunit from Chlamydia muridarum (strain MoPn / Nigg).